The primary structure comprises 332 residues: 4-hydroxy-3-methylbut-2-enyl diphosphate reductase (332 aa).

A [4Fe-4S] cluster-binding site is contributed by Cys34. His63 and His96 together coordinate (2E)-4-hydroxy-3-methylbut-2-enyl diphosphate. Residues His63 and His96 each coordinate dimethylallyl diphosphate. Isopentenyl diphosphate contacts are provided by His63 and His96. Cys118 provides a ligand contact to [4Fe-4S] cluster. Residue His146 coordinates (2E)-4-hydroxy-3-methylbut-2-enyl diphosphate. His146 contacts dimethylallyl diphosphate. Residue His146 participates in isopentenyl diphosphate binding. Glu148 acts as the Proton donor in catalysis. Thr186 is a (2E)-4-hydroxy-3-methylbut-2-enyl diphosphate binding site. A [4Fe-4S] cluster-binding site is contributed by Cys216. Ser244, Ser245, Asn246, and Ser289 together coordinate (2E)-4-hydroxy-3-methylbut-2-enyl diphosphate. Ser244, Ser245, Asn246, and Ser289 together coordinate dimethylallyl diphosphate. The isopentenyl diphosphate site is built by Ser244, Ser245, Asn246, and Ser289.

Belongs to the IspH family. [4Fe-4S] cluster serves as cofactor.

The catalysed reaction is isopentenyl diphosphate + 2 oxidized [2Fe-2S]-[ferredoxin] + H2O = (2E)-4-hydroxy-3-methylbut-2-enyl diphosphate + 2 reduced [2Fe-2S]-[ferredoxin] + 2 H(+). It catalyses the reaction dimethylallyl diphosphate + 2 oxidized [2Fe-2S]-[ferredoxin] + H2O = (2E)-4-hydroxy-3-methylbut-2-enyl diphosphate + 2 reduced [2Fe-2S]-[ferredoxin] + 2 H(+). Its pathway is isoprenoid biosynthesis; dimethylallyl diphosphate biosynthesis; dimethylallyl diphosphate from (2E)-4-hydroxy-3-methylbutenyl diphosphate: step 1/1. It functions in the pathway isoprenoid biosynthesis; isopentenyl diphosphate biosynthesis via DXP pathway; isopentenyl diphosphate from 1-deoxy-D-xylulose 5-phosphate: step 6/6. Catalyzes the conversion of 1-hydroxy-2-methyl-2-(E)-butenyl 4-diphosphate (HMBPP) into a mixture of isopentenyl diphosphate (IPP) and dimethylallyl diphosphate (DMAPP). Acts in the terminal step of the DOXP/MEP pathway for isoprenoid precursor biosynthesis. This chain is 4-hydroxy-3-methylbut-2-enyl diphosphate reductase, found in Mycobacterium ulcerans (strain Agy99).